Here is a 380-residue protein sequence, read N- to C-terminus: Chorismate synthase (380 aa).

Residue Arg-49 participates in NADP(+) binding. Residues Gly-288, 303 to 307, and Arg-330 contribute to the FMN site; that span reads KPPSS.

It belongs to the chorismate synthase family. FMNH2 is required as a cofactor.

The catalysed reaction is 5-O-(1-carboxyvinyl)-3-phosphoshikimate = chorismate + phosphate. It participates in metabolic intermediate biosynthesis; chorismate biosynthesis; chorismate from D-erythrose 4-phosphate and phosphoenolpyruvate: step 7/7. Catalyzes the anti-1,4-elimination of the C-3 phosphate and the C-6 proR hydrogen from 5-enolpyruvylshikimate-3-phosphate (EPSP) to yield chorismate, which is the branch point compound that serves as the starting substrate for the three terminal pathways of aromatic amino acid biosynthesis. This reaction introduces a second double bond into the aromatic ring system. This Aeropyrum pernix (strain ATCC 700893 / DSM 11879 / JCM 9820 / NBRC 100138 / K1) protein is Chorismate synthase.